We begin with the raw amino-acid sequence, 2988 residues long: MVVSAGPWSSEKAEMNILEINETLRPQLAEKKQQFRNLKEKCFLTQLAGFLANQQKKYKYEECKDLIKFMLRNERQFKEEKLAEQLKQAEELRQYKVLVHSQERELTQLREKLREGRDASRSLYEHLQALLTPYEPDKSQGQDLQEQLAEGCRLAQHLVQKLSPENDEDEDEDVQVEEAEKVLESSAPREVQKAEESKVPEDSLEECAITCSNSHGPCDSNQPHKNIKITFEEDEVNSTLVVDRESSHDECQDALNILPVPGPTSSATNVSMVVSAGPLSSEKAEMNILEINEKLRPQLAEKKQQFRNLKEKCFLTQLSGFLANQQKKYKYEECKDLIKFMLRNERQFKEEKLAEQLKQAEELRQYKVLVHAQERELTQLREKLREGRDASRSLNEHLQALLTPDEPDKSQGQDLQEQLAEGCRLAQHLVQKLSPENDNDDDEDVQVEVAEKVQKSSAPREMQKAEEKEVPEDSLEECAITYSNSHGSYDSNQPHRKTKITFEEDKVDSTLIGSSSHVEWEDAVHIIPENESDDEEEEEKGPVSPRNLQESEEEEVPQESWDEGYSTLSIPPEMLASYQSYSSTFHSLEEQQVCMAVDIGRHRWDQVKKEDQEATGPRLSRELLDEKGPEVLQDSLDRCYSTPSGCLELTDSCQPYRSAFYVLEQQRVGLAVDMDEIEKYQEVEEDQDPSCPRLSRELLDEKEPEVLQDSLDRCYSTPSGYLELPDLGQPYSSAVYSLEEQYLGLALDVDRIKKDEEEEEDQDPPCPRLSRELLEVVEPEVLQDSLDRCYSTPSSCLEQPDSCQPYGSSFYALEEKHVGFSLDVGEIEKKGKGKKRRGRRSKKERRRGRKEGEEDQNPPCPRLSRELLDEKEPEVLQDSLDRCYSTPSGYLELPDLGQPYSSAVYSLEEQYLGLALDVDRIKKDEEEEEDQDPPCPRLSRELLEVVEPEVLQDSLDRCYSTPSSCLEQPDSCQPYGSSFYALEEKHVGFSLDVGEIEKKGKGKKRRGRRSKKERRRGRKEGEEDQNPPCPRLSRELLDEKGPEVLQDSLDRCYSTPSGCLELTDSCQPYRSAFYVLEQQRVGLAVDMDEIEKYQEVEEDQDPSCPRLSRELLDEKEPEVLQDSLDRCYSTPSGYLELPDLGQPYSSAVYSLEEQYLGLALDVDRIKKDEEEEEDQDPPCPRLSRELLEVVEPEVLQDSLDRCYSTPSSCLEQPDSCQPYGSSFYALEEKHVGFSLDVGEIEKKGKGKKRRGRRSKKERRRGRKEGEEDQNPPCPRLSRELLDEKGPEVLQDSLDRCYSTPSGCLELTDSCQPYRSAFYVLEQQRVGLAVDMDEIEKYQEVEEDQDPSCPRLSRELLDEKEPEVLQDSLDRCYSTPSGYLELPDLGQPYSSAVYSLEEQYLGLALDVDRIKKDEEEEEDQDPPCPRLSRELLEVVEPEVLQDSLDRCYSTPSSCLEQPDSCQPYGSSFYALEEKHVGFSLDVGEIEKKGKGKKRRGRRSKKERRRGRKEGEEDQNPPCPRLSRELLHEKGPEVLQDSLDRCYSTPSGCLELTDSCQPYRSAFYILEQQRVGLAVDMDEIEKYKEVEEDQDPSCPRLSRELLDEKEPEVLQDSLDRCYSTPSGYLELPDLGQPYSSAVYSLEEQYLGLALDVDRFKKDEEEEEDQDPPCPRLSRELLEVVEPEVLQDSLDRCYSTPSSCLEQPDSCQPYGSSFYALEEKHVGFSLDVGEIEKKGKGKKRRGRRSKKERRRGRKEGEEDQNPPCPRLSRELLDEKGPEVLQDSLDRCYSTPSGCLELTDSCQPYRSAFYVLEQQRVGLAVDMDEIEKYKEVEEDQDPSCPRLSRELLDEKEPEVLQDSLDRCYSTPSGYLELPDLGQPYSSAVYSLEEQYLGLALDVDRIKKDQEEEEDQGPPCPRLSRELLEVVEPEVLQDSLDRCYSTPSSCLEQPDSCQPYGSSFYALEEKHVGFSLDVGEIEKKGKGKKRRGRRSKKERRRGRKEGEEDQNPPCPRLSRELLDEKGPEVLQDSLDRCYSTPSGCLELTDSCQPYRSAFYVLEQQRVGLAVDMDEIEKYKEVEEDQDPSCPRLSRELLDEKEPEVLQDSLDRCYSTPSGYLELPDLGQPYSSAVYSLEEQYLGLALDVDRIKKDQEEEEDQGPPCPRLSRELLEVVEPEVLQDSLDRCYSTPSSCLEQPDSCQPYGSSFYALEEKHVGFSLDVGEIEKKGKGKKRRGRRSKKERRRGRKEGEEDQNPPCPRLSRELLDEKGPEVLQDSLDRCYSTPSGCLELTDSCQPYRSAFYVLEQQRVGLAVDMDEIEKYKEVEEDQDPSCPRLSRELLDEKEPEVLQDSLDRCYSTPSGYLELPDLGQPYSSAVYSLEEQYLGLALDVDRIKKDQEEEEDQGPPCPRLSRELLEVVEPEVLQDSLDRCYSTPSSCLEQPDSCQPYGSSFYALEEKHVGFSLDVGEIEKKGKGKKRRGRRSKKERRRGRKEGEEDQNPPCPRLSRELLDEKGPEVLQDSLDRCYSTPSGCLELTDSCQPYRSAFYVLEQQRVGLAVDMDEIEKYKEVEEDQDPSCPRLSRELLDEKEPEVLQDSLDRCYSTPSGYLELPDLGQPYSSAVYSLEEQYLGLALDVDRIKKDQEEEEDQGPPCPRLSRELLEVVEPEVLQDSLDRCYSTPSSCLEQPDSCQPYGSSFYALEEKHVGFSLDVGEIEKKGKGKKRRGRRSKKERRRGRKEGEEDQNPPCPRLSRELLDEKGPEVLQDSLDRCYSTPSGCLELTDSCQPYRSAFYVLEQQRVGLAVDMDEIEKYQEVEEDQDPSCPRLSRELLDEKDPEVLQDSLDRCYSTPSGYLELPDLGQPYSSAVYSLEEQYLGLALDVDKIEKKGKGKKRRGRRSKKERRRGRKEGEEDQNPPCPRLNGVLMEVEEREVLQDSLDRCYSTPSMYFELPDSFQHYRSVFYSFEEQHISFALYVDNRFFTLTVTSLHLVFQMGVIFPQ.

Residues 75–119 (RQFKEEKLAEQLKQAEELRQYKVLVHSQERELTQLREKLREGRDA) are a coiled coil. 3 disordered regions span residues 161 to 200 (KLSP…SKVP), 451 to 474 (EKVQ…PEDS), and 520 to 566 (WEDA…EGYS). The segment covering 165–177 (ENDEDEDEDVQVE) has biased composition (acidic residues). Olduvai domains lie at 165-259 (ENDE…NILP), 436-528 (ENDN…HIIP), 529-600 (ENES…VDIG), 601-692 (RHRW…PSCP), 695-750 (SREL…LDVD), 751-843 (RIKK…RSKK), 844-919 (ERRR…LDVD), 920-1012 (RIKK…RSKK), 1013-1105 (ERRR…PSCP), 1108-1163 (SREL…LDVD), 1164-1256 (RIKK…RSKK), 1257-1349 (ERRR…PSCP), 1352-1407 (SREL…LDVD), 1408-1500 (RIKK…RSKK), 1501-1593 (ERRR…PSCP), 1596-1651 (SREL…LDVD), 1652-1744 (RFKK…RSKK), 1745-1837 (ERRR…PSCP), 1840-1895 (SREL…LDVD), 1896-1988 (RIKK…RSKK), 1989-2081 (ERRR…PSCP), 2084-2139 (SREL…LDVD), 2140-2232 (RIKK…RSKK), 2233-2325 (ERRR…PSCP), 2328-2383 (SREL…LDVD), 2384-2476 (RIKK…RSKK), 2477-2569 (ERRR…PSCP), 2572-2627 (SREL…LDVD), 2628-2720 (RIKK…RSKK), 2721-2813 (ERRR…PSCP), 2816-2889 (SREL…RSKK), and 2890-2988 (ERRR…IFPQ). Positions 190–200 (EVQKAEESKVP) are enriched in basic and acidic residues. Composition is skewed to acidic residues over residues 530–539 (NESDDEEEEE) and 550–562 (ESEE…ESWD). Disordered stretches follow at residues 754 to 773 (KDEE…SREL), 828 to 871 (EKKG…LDEK), and 999 to 1038 (KGKG…ELLD). Basic residues-rich tracts occupy residues 831–849 (GKGK…RRGR) and 1000–1018 (GKGK…RRGR). Positions 1243-1282 (KGKGKKRRGRRSKKERRRGRKEGEEDQNPPCPRLSRELLD) are disordered. Residues 1244–1262 (GKGKKRRGRRSKKERRRGR) show a composition bias toward basic residues. Residues 1487–1521 (KGKGKKRRGRRSKKERRRGRKEGEEDQNPPCPRLS) form a disordered region. Positions 1488 to 1506 (GKGKKRRGRRSKKERRRGR) are enriched in basic residues. The tract at residues 1731–1770 (KGKGKKRRGRRSKKERRRGRKEGEEDQNPPCPRLSRELLD) is disordered. Basic residues predominate over residues 1732-1750 (GKGKKRRGRRSKKERRRGR). A disordered region spans residues 1975 to 2014 (KGKGKKRRGRRSKKERRRGRKEGEEDQNPPCPRLSRELLD). Residues 1976–1994 (GKGKKRRGRRSKKERRRGR) show a composition bias toward basic residues. A disordered region spans residues 2219-2258 (KGKGKKRRGRRSKKERRRGRKEGEEDQNPPCPRLSRELLD). Basic residues predominate over residues 2220–2238 (GKGKKRRGRRSKKERRRGR). Residues 2463 to 2502 (KGKGKKRRGRRSKKERRRGRKEGEEDQNPPCPRLSRELLD) are disordered. Over residues 2464–2482 (GKGKKRRGRRSKKERRRGR) the composition is skewed to basic residues. Disordered regions lie at residues 2707–2745 (KGKG…RELL) and 2877–2909 (GKGK…CPRL). Basic residues-rich tracts occupy residues 2708-2726 (GKGK…RRGR) and 2877-2895 (GKGK…RRGR).

This sequence belongs to the NBPF family. Expressed in spleen and fetal liver.

The protein localises to the cytoplasm. The polypeptide is NBPF family member NBPF14 (Homo sapiens (Human)).